We begin with the raw amino-acid sequence, 187 residues long: Ribosome-recycling factor (187 aa).

It belongs to the RRF family.

Its subcellular location is the cytoplasm. Responsible for the release of ribosomes from messenger RNA at the termination of protein biosynthesis. May increase the efficiency of translation by recycling ribosomes from one round of translation to another. This Methylobacterium nodulans (strain LMG 21967 / CNCM I-2342 / ORS 2060) protein is Ribosome-recycling factor.